Consider the following 236-residue polypeptide: Small ribosomal subunit protein uS3 (236 aa).

Positions 39–107 constitute a KH type-2 domain; it reads IREILHKELK…DVVINIVEIR (69 aa). The segment at 213–236 is disordered; it reads MAQDKRMNEGGGESPSPRSRRDAA.

Belongs to the universal ribosomal protein uS3 family. Part of the 30S ribosomal subunit. Forms a tight complex with proteins S10 and S14.

Functionally, binds the lower part of the 30S subunit head. Binds mRNA in the 70S ribosome, positioning it for translation. The sequence is that of Small ribosomal subunit protein uS3 from Bradyrhizobium sp. (strain ORS 278).